The primary structure comprises 1275 residues: ATP-dependent helicase/nuclease subunit A (1275 aa).

One can recognise a UvrD-like helicase ATP-binding domain in the interval 4–481 (PKWTKEQLEV…IMLYKNFRSR (478 aa)). Residue 25-32 (AAAGSGKT) participates in ATP binding. Residues 531–839 (TEIHLIQKDN…RIMSIHKSKG (309 aa)) form the UvrD-like helicase C-terminal domain.

This sequence belongs to the helicase family. AddA subfamily. As to quaternary structure, heterodimer of AddA and AddB/RexB. Requires Mg(2+) as cofactor.

It catalyses the reaction Couples ATP hydrolysis with the unwinding of duplex DNA by translocating in the 3'-5' direction.. It carries out the reaction ATP + H2O = ADP + phosphate + H(+). Functionally, the heterodimer acts as both an ATP-dependent DNA helicase and an ATP-dependent, dual-direction single-stranded exonuclease. Recognizes the chi site generating a DNA molecule suitable for the initiation of homologous recombination. The AddA nuclease domain is required for chi fragment generation; this subunit has the helicase and 3' -&gt; 5' nuclease activities. This is ATP-dependent helicase/nuclease subunit A from Clostridioides difficile (strain 630) (Peptoclostridium difficile).